The following is a 156-amino-acid chain: Transcription elongation factor GreA (156 aa).

Positions 45 to 66 (NAEYHSAKEKQSFIEGRIKELE) form a coiled coil.

The protein belongs to the GreA/GreB family.

Functionally, necessary for efficient RNA polymerase transcription elongation past template-encoded arresting sites. The arresting sites in DNA have the property of trapping a certain fraction of elongating RNA polymerases that pass through, resulting in locked ternary complexes. Cleavage of the nascent transcript by cleavage factors such as GreA or GreB allows the resumption of elongation from the new 3'terminus. GreA releases sequences of 2 to 3 nucleotides. This is Transcription elongation factor GreA from Jannaschia sp. (strain CCS1).